We begin with the raw amino-acid sequence, 240 residues long: uncharacterized protein (240 aa).

This is an uncharacterized protein from Thermotoga maritima (strain ATCC 43589 / DSM 3109 / JCM 10099 / NBRC 100826 / MSB8).